Consider the following 198-residue polypeptide: Leucyl/phenylalanyl-tRNA--protein transferase (198 aa).

It belongs to the L/F-transferase family.

The protein localises to the cytoplasm. The catalysed reaction is N-terminal L-lysyl-[protein] + L-leucyl-tRNA(Leu) = N-terminal L-leucyl-L-lysyl-[protein] + tRNA(Leu) + H(+). It catalyses the reaction N-terminal L-arginyl-[protein] + L-leucyl-tRNA(Leu) = N-terminal L-leucyl-L-arginyl-[protein] + tRNA(Leu) + H(+). It carries out the reaction L-phenylalanyl-tRNA(Phe) + an N-terminal L-alpha-aminoacyl-[protein] = an N-terminal L-phenylalanyl-L-alpha-aminoacyl-[protein] + tRNA(Phe). Functionally, functions in the N-end rule pathway of protein degradation where it conjugates Leu, Phe and, less efficiently, Met from aminoacyl-tRNAs to the N-termini of proteins containing an N-terminal arginine or lysine. This chain is Leucyl/phenylalanyl-tRNA--protein transferase, found in Synechocystis sp. (strain ATCC 27184 / PCC 6803 / Kazusa).